We begin with the raw amino-acid sequence, 383 residues long: tRNA pseudouridine synthase B (383 aa).

Aspartate 53 functions as the Nucleophile in the catalytic mechanism.

This sequence belongs to the pseudouridine synthase TruB family. Type 1 subfamily.

It catalyses the reaction uridine(55) in tRNA = pseudouridine(55) in tRNA. Its function is as follows. Responsible for synthesis of pseudouridine from uracil-55 in the psi GC loop of transfer RNAs. The polypeptide is tRNA pseudouridine synthase B (Tropheryma whipplei (strain TW08/27) (Whipple's bacillus)).